Reading from the N-terminus, the 92-residue chain is Large ribosomal subunit protein eL37 (92 aa).

Zn(2+) is bound by residues Cys-19, Cys-22, Cys-34, and Cys-37. Residues 19 to 37 (CRRCGRSSYHIQKSKCAQC) form a C4-type zinc finger.

It belongs to the eukaryotic ribosomal protein eL37 family. It depends on Zn(2+) as a cofactor.

Its function is as follows. Binds to the 23S rRNA. The sequence is that of Large ribosomal subunit protein eL37 (RpL37) from Spodoptera frugiperda (Fall armyworm).